Here is a 280-residue protein sequence, read N- to C-terminus: MKAFATRALAFSVAAGQALAAVTQGVSDNTYNRLVEMATISQAAYANLCNIPATIQTVEKIYNAQTDINGWVLRDDSRQEIITVFRGTGSDTNLQLDTNYTLAPFDTLPQCVGCAVHGGYYLGWLSVQDQVQSLVQQQASQYRGYAVTVTGHSLGASMAAITAAQLSATYDNVNLYTFGEPRTGNQAYASYMNEAFDSASPETTRYFRVTHADDGIPNVPPAEQGYVHSGVEYWSVEPHSPQNTYICTGDEIQCCEAQGGQGVNAAHVTYFGMTSGACSW.

The first 20 residues, 1–20 (MKAFATRALAFSVAAGQALA), serve as a signal peptide directing secretion. Disulfide bonds link Cys-49-Cys-278, Cys-111-Cys-114, and Cys-247-Cys-254. N-linked (GlcNAc...) asparagine glycosylation is present at Asn-99. Ser-153 (nucleophile) is an active-site residue. The active-site Charge relay system is the Asp-214. His-267 (charge relay system) is an active-site residue.

This sequence belongs to the AB hydrolase superfamily. FaeA family. Glycosylated.

It localises to the secreted. The enzyme catalyses feruloyl-polysaccharide + H2O = ferulate + polysaccharide.. Metal or basic ions Mn(2+), Ni(+), Mg(2+), and NH(4)(+) decrease the activity by 4.4% to 14.1%. The enzymatic activity is inhibited by Zn(2+) at a low concentration (1 mM) but not a high concentration (5 mM). Loses about a quarter of activity by the addition of 1 mM of Cu(2+) or Fe(3+) and activity is completely suppressed when the concentration was up to 5 mM. Low concentrations (0.25 and 0.5 M) of NaCl improve the activity by 5.6 % or 8.3%, respectively. In terms of biological role, involved in degradation of plant cell walls. Hydrolyzes the feruloyl-arabinose ester bond in arabinoxylans, and the feruloyl-galactose ester bond in pectin. This chain is Feruloyl esterase 1, found in Penicillium parvum (Eupenicillium parvum).